The following is a 289-amino-acid chain: Pantothenate synthetase (289 aa).

Position 28-35 (28-35 (MGCLHEGH)) interacts with ATP. Residue His35 is the Proton donor of the active site. Gln59 serves as a coordination point for (R)-pantoate. Gln59 is a beta-alanine binding site. 147–150 (GLKD) contacts ATP. Gln153 contributes to the (R)-pantoate binding site. Residues Val176 and 184 to 187 (MSSR) contribute to the ATP site.

The protein belongs to the pantothenate synthetase family. As to quaternary structure, homodimer.

The protein localises to the cytoplasm. It carries out the reaction (R)-pantoate + beta-alanine + ATP = (R)-pantothenate + AMP + diphosphate + H(+). It participates in cofactor biosynthesis; (R)-pantothenate biosynthesis; (R)-pantothenate from (R)-pantoate and beta-alanine: step 1/1. Its function is as follows. Catalyzes the condensation of pantoate with beta-alanine in an ATP-dependent reaction via a pantoyl-adenylate intermediate. The protein is Pantothenate synthetase of Magnetococcus marinus (strain ATCC BAA-1437 / JCM 17883 / MC-1).